The chain runs to 509 residues: Lanosterol 14-alpha demethylase (509 aa).

A helical membrane pass occupies residues 30 to 50 (GNLLSMLLIACAFTLSLVYLF). Heme is bound at residue C455.

This sequence belongs to the cytochrome P450 family. Requires heme as cofactor. In terms of processing, ubiquitinated by MARCHF6, leading to proteasomal degradation.

It localises to the endoplasmic reticulum membrane. The protein localises to the microsome membrane. It catalyses the reaction a 14alpha-methyl steroid + 3 reduced [NADPH--hemoprotein reductase] + 3 O2 = a Delta(14) steroid + formate + 3 oxidized [NADPH--hemoprotein reductase] + 4 H2O + 4 H(+). It carries out the reaction lanosterol + 3 reduced [NADPH--hemoprotein reductase] + 3 O2 = 4,4-dimethyl-5alpha-cholesta-8,14,24-trien-3beta-ol + formate + 3 oxidized [NADPH--hemoprotein reductase] + 4 H2O + 4 H(+). The enzyme catalyses 24,25-dihydrolanosterol + 3 reduced [NADPH--hemoprotein reductase] + 3 O2 = 4,4-dimethyl-8,14-cholestadien-3beta-ol + formate + 3 oxidized [NADPH--hemoprotein reductase] + 4 H2O + 4 H(+). The catalysed reaction is a 14alpha-methyl steroid + reduced [NADPH--hemoprotein reductase] + O2 = a 14alpha-hydroxymethyl steroid + oxidized [NADPH--hemoprotein reductase] + H2O + H(+). It catalyses the reaction a 14alpha-hydroxymethyl steroid + reduced [NADPH--hemoprotein reductase] + O2 = a 14alpha-formyl steroid + oxidized [NADPH--hemoprotein reductase] + 2 H2O + H(+). It carries out the reaction a 14alpha-formyl steroid + reduced [NADPH--hemoprotein reductase] + O2 = a Delta(14) steroid + formate + oxidized [NADPH--hemoprotein reductase] + H2O + 2 H(+). The enzyme catalyses lanosterol + reduced [NADPH--hemoprotein reductase] + O2 = 32-hydroxylanosterol + oxidized [NADPH--hemoprotein reductase] + H2O + H(+). The catalysed reaction is 32-hydroxylanosterol + reduced [NADPH--hemoprotein reductase] + O2 = 32-oxolanosterol + oxidized [NADPH--hemoprotein reductase] + 2 H2O + H(+). It catalyses the reaction 32-oxolanosterol + reduced [NADPH--hemoprotein reductase] + O2 = 4,4-dimethyl-5alpha-cholesta-8,14,24-trien-3beta-ol + formate + oxidized [NADPH--hemoprotein reductase] + H2O + 2 H(+). It carries out the reaction 24,25-dihydrolanosterol + reduced [NADPH--hemoprotein reductase] + O2 = 32-hydroxy-24,25-dihydrolanosterol + oxidized [NADPH--hemoprotein reductase] + H2O + H(+). The enzyme catalyses 32-hydroxy-24,25-dihydrolanosterol + reduced [NADPH--hemoprotein reductase] + O2 = 32-oxo-24,25-dihydrolanosterol + oxidized [NADPH--hemoprotein reductase] + 2 H2O + H(+). The catalysed reaction is 32-oxo-24,25-dihydrolanosterol + reduced [NADPH--hemoprotein reductase] + O2 = 4,4-dimethyl-8,14-cholestadien-3beta-ol + formate + oxidized [NADPH--hemoprotein reductase] + H2O + 2 H(+). It functions in the pathway steroid biosynthesis; zymosterol biosynthesis; zymosterol from lanosterol: step 1/6. With respect to regulation, inhibited by azalanstat. Inhibited by azole antifungal agents ketoconazole, itraconazole and fluconazole. Functionally, sterol 14alpha-demethylase that plays a critical role in the cholesterol biosynthesis pathway, being cholesterol the major sterol component in mammalian membranes as well as a precursor for bile acid and steroid hormone synthesis. Cytochrome P450 monooxygenase that catalyzes the three-step oxidative removal of the 14alpha-methyl group (C-32) of sterols such as lanosterol (lanosta-8,24-dien-3beta-ol) and 24,25-dihydrolanosterol (DHL) in the form of formate, and converts the sterols to 4,4-dimethyl-5alpha-cholesta-8,14,24-trien-3beta-ol and 4,4-dimethyl-8,14-cholestadien-3beta-ol, respectively, which are intermediates of cholesterol biosynthesis. Can also demethylate substrates not intrinsic to mammals, such as eburicol (24-methylene-24,25-dihydrolanosterol), but at a lower rate than DHL. This is Lanosterol 14-alpha demethylase from Pongo abelii (Sumatran orangutan).